A 38-amino-acid polypeptide reads, in one-letter code: Potassium channel toxin alpha-KTx 3.17 (38 aa).

3 disulfides stabilise this stretch: Cys8/Cys28, Cys14/Cys33, and Cys18/Cys35.

This sequence belongs to the short scorpion toxin superfamily. Potassium channel inhibitor family. Alpha-KTx 03 subfamily. As to expression, expressed by the venom gland.

The protein localises to the secreted. In terms of biological role, completely inhibits the (125)I-kaliotoxin binding on rat brain synaptosomes with high-affinity (IC(50)=0.1 nM). Is a potent Kv1.3/KCNA3 ligand. This chain is Potassium channel toxin alpha-KTx 3.17, found in Buthus paris (Scorpion).